Reading from the N-terminus, the 544-residue chain is Spore germination protein KA (544 aa).

Residues 1 to 36 form a disordered region; it reads MPLFSKRKNNTDSKDKQNTDERNQEQQQEKERPVLI. Basic and acidic residues predominate over residues 9–33; it reads NNTDSKDKQNTDERNQEQQQEKERP. The next 5 helical transmembrane spans lie at 279 to 299, 321 to 341, 392 to 412, 416 to 436, and 443 to 463; these read FAII…FVQF, VLVF…TTFH, AVSI…GIVS, VIIV…AMAI, and FIFI…GIIM. Positions 504-523 are enriched in basic and acidic residues; sequence KRPESVSKEDKVRQGKDQRP. The disordered stretch occupies residues 504 to 544; the sequence is KRPESVSKEDKVRQGKDQRPEPAASRGMVNKDLEEGDQNGT.

It belongs to the GerABKA family.

It localises to the cell membrane. Involved in the germination response to the combination of glucose, fructose, L-asparagine, and KCl. This Bacillus subtilis (strain 168) protein is Spore germination protein KA (gerKA).